The sequence spans 159 residues: Transcriptional repressor NrdR (159 aa).

The segment at 3–34 (CPFCRHEDTQVVDSRVSEDGAAIRRRRRCSAC) is a zinc-finger region. Residues 49 to 139 (PAVVKKDGSR…VYRRFEDVSE (91 aa)) form the ATP-cone domain.

This sequence belongs to the NrdR family. The cofactor is Zn(2+).

In terms of biological role, negatively regulates transcription of bacterial ribonucleotide reductase nrd genes and operons by binding to NrdR-boxes. This Burkholderia vietnamiensis (strain G4 / LMG 22486) (Burkholderia cepacia (strain R1808)) protein is Transcriptional repressor NrdR.